Reading from the N-terminus, the 248-residue chain is Triosephosphate isomerase (248 aa).

Position 9-11 (9-11) interacts with substrate; that stretch reads NWK. H94 serves as the catalytic Electrophile. E166 serves as the catalytic Proton acceptor. Substrate is bound by residues G172, S212, and 233–234; that span reads GG.

It belongs to the triosephosphate isomerase family. Homodimer.

The protein localises to the cytoplasm. It carries out the reaction D-glyceraldehyde 3-phosphate = dihydroxyacetone phosphate. It participates in carbohydrate biosynthesis; gluconeogenesis. The protein operates within carbohydrate degradation; glycolysis; D-glyceraldehyde 3-phosphate from glycerone phosphate: step 1/1. Involved in the gluconeogenesis. Catalyzes stereospecifically the conversion of dihydroxyacetone phosphate (DHAP) to D-glyceraldehyde-3-phosphate (G3P). The chain is Triosephosphate isomerase from Clostridium perfringens (strain ATCC 13124 / DSM 756 / JCM 1290 / NCIMB 6125 / NCTC 8237 / Type A).